Here is a 66-residue protein sequence, read N- to C-terminus: Large ribosomal subunit protein bL33c (66 aa).

The protein belongs to the bacterial ribosomal protein bL33 family.

Its subcellular location is the plastid. The protein is Large ribosomal subunit protein bL33c of Cuscuta gronovii (Common dodder).